The primary structure comprises 409 residues: Arginine deiminase (409 aa).

The active-site Amidino-cysteine intermediate is cysteine 399.

Belongs to the arginine deiminase family.

It localises to the cytoplasm. It catalyses the reaction L-arginine + H2O = L-citrulline + NH4(+). It participates in amino-acid degradation; L-arginine degradation via ADI pathway; carbamoyl phosphate from L-arginine: step 1/2. The sequence is that of Arginine deiminase from Borrelia recurrentis (strain A1).